A 457-amino-acid chain; its full sequence is Bifunctional protein GlmU (457 aa).

The interval 1–230 (MSKRYAVVLA…FEESLGVNDR (230 aa)) is pyrophosphorylase. UDP-N-acetyl-alpha-D-glucosamine is bound by residues 9–12 (LAAG), lysine 23, glutamine 73, and 78–79 (GT). Aspartate 103 is a binding site for Mg(2+). Glycine 140, glutamate 155, asparagine 170, and asparagine 228 together coordinate UDP-N-acetyl-alpha-D-glucosamine. Asparagine 228 is a binding site for Mg(2+). The tract at residues 231-251 (IALAEASKLMQRRINENHMRN) is linker. The N-acetyltransferase stretch occupies residues 252–457 (GVTLVNPEST…GYAKHLNHGK (206 aa)). UDP-N-acetyl-alpha-D-glucosamine contacts are provided by arginine 333 and lysine 351. The active-site Proton acceptor is the histidine 363. UDP-N-acetyl-alpha-D-glucosamine is bound by residues tyrosine 366 and asparagine 377. Acetyl-CoA contacts are provided by residues 386–387 (NY), alanine 423, and arginine 440.

In the N-terminal section; belongs to the N-acetylglucosamine-1-phosphate uridyltransferase family. This sequence in the C-terminal section; belongs to the transferase hexapeptide repeat family. Homotrimer. The cofactor is Mg(2+).

It is found in the cytoplasm. The catalysed reaction is alpha-D-glucosamine 1-phosphate + acetyl-CoA = N-acetyl-alpha-D-glucosamine 1-phosphate + CoA + H(+). It carries out the reaction N-acetyl-alpha-D-glucosamine 1-phosphate + UTP + H(+) = UDP-N-acetyl-alpha-D-glucosamine + diphosphate. It functions in the pathway nucleotide-sugar biosynthesis; UDP-N-acetyl-alpha-D-glucosamine biosynthesis; N-acetyl-alpha-D-glucosamine 1-phosphate from alpha-D-glucosamine 6-phosphate (route II): step 2/2. Its pathway is nucleotide-sugar biosynthesis; UDP-N-acetyl-alpha-D-glucosamine biosynthesis; UDP-N-acetyl-alpha-D-glucosamine from N-acetyl-alpha-D-glucosamine 1-phosphate: step 1/1. The protein operates within bacterial outer membrane biogenesis; LPS lipid A biosynthesis. Functionally, catalyzes the last two sequential reactions in the de novo biosynthetic pathway for UDP-N-acetylglucosamine (UDP-GlcNAc). The C-terminal domain catalyzes the transfer of acetyl group from acetyl coenzyme A to glucosamine-1-phosphate (GlcN-1-P) to produce N-acetylglucosamine-1-phosphate (GlcNAc-1-P), which is converted into UDP-GlcNAc by the transfer of uridine 5-monophosphate (from uridine 5-triphosphate), a reaction catalyzed by the N-terminal domain. The sequence is that of Bifunctional protein GlmU from Listeria monocytogenes serotype 4a (strain HCC23).